A 1318-amino-acid chain; its full sequence is Tetratricopeptide repeat protein 41 (1318 aa).

TPR repeat units lie at residues 401 to 434 (PRLE…KPCI), 653 to 686 (WIQE…PVRE), 819 to 852 (GRII…LLQS), 860 to 893 (LRAQ…LLRF), 993 to 1029 (MEFL…KEKA), and 1047 to 1084 (SDTL…RAAH). Residues 1295 to 1318 (KPGFPRRSQIESKLLKTSDDPNKE) are disordered. A compositionally biased stretch (basic and acidic residues) spans 1302–1318 (SQIESKLLKTSDDPNKE).

In terms of tissue distribution, highly expressed in lung and myeloid leukemia cell line (at protein level). Isoform 4: expressed in heart (at protein level).

The protein localises to the cytoplasm. The chain is Tetratricopeptide repeat protein 41 from Mus musculus (Mouse).